Reading from the N-terminus, the 89-residue chain is Small ribosomal subunit protein uS15 (89 aa).

The protein belongs to the universal ribosomal protein uS15 family. In terms of assembly, part of the 30S ribosomal subunit. Forms a bridge to the 50S subunit in the 70S ribosome, contacting the 23S rRNA.

One of the primary rRNA binding proteins, it binds directly to 16S rRNA where it helps nucleate assembly of the platform of the 30S subunit by binding and bridging several RNA helices of the 16S rRNA. In terms of biological role, forms an intersubunit bridge (bridge B4) with the 23S rRNA of the 50S subunit in the ribosome. The chain is Small ribosomal subunit protein uS15 from Acaryochloris marina (strain MBIC 11017).